Reading from the N-terminus, the 345-residue chain is Molybdate/tungstate-binding protein WtpA (345 aa).

The first 27 residues, 1-27, serve as a signal peptide directing secretion; sequence MREGGVMKKRLLALIVAFAVLTAGCLG. Molybdate is bound by residues 41 to 42, Ser-75, 160 to 162, Glu-218, and Tyr-236; these read GS and DPC. Residues 41 to 42, Ser-75, 160 to 162, Glu-218, and Tyr-236 each bind tungstate; these read GS and DPC.

It belongs to the bacterial solute-binding protein 1 family. WtpA subfamily. Monomer. The complex is composed of two ATP-binding proteins (WtpC), two transmembrane proteins (WtpB) and a solute-binding protein (WtpA).

It is found in the cell membrane. Functionally, part of the ABC transporter complex WtpABC involved in molybdate/tungstate import. Binds tungstate and molybdate, with a preference for tungstate. The chain is Molybdate/tungstate-binding protein WtpA from Pyrococcus furiosus (strain ATCC 43587 / DSM 3638 / JCM 8422 / Vc1).